Reading from the N-terminus, the 309-residue chain is Ribonuclease Z (309 aa).

Zn(2+) is bound by residues histidine 63, histidine 65, aspartate 67, histidine 68, histidine 141, aspartate 212, and histidine 270. Aspartate 67 (proton acceptor) is an active-site residue.

The protein belongs to the RNase Z family. In terms of assembly, homodimer. Zn(2+) is required as a cofactor.

The catalysed reaction is Endonucleolytic cleavage of RNA, removing extra 3' nucleotides from tRNA precursor, generating 3' termini of tRNAs. A 3'-hydroxy group is left at the tRNA terminus and a 5'-phosphoryl group is left at the trailer molecule.. Its function is as follows. Zinc phosphodiesterase, which displays some tRNA 3'-processing endonuclease activity. Probably involved in tRNA maturation, by removing a 3'-trailer from precursor tRNA. This chain is Ribonuclease Z, found in Lactobacillus gasseri (strain ATCC 33323 / DSM 20243 / BCRC 14619 / CIP 102991 / JCM 1131 / KCTC 3163 / NCIMB 11718 / NCTC 13722 / AM63).